We begin with the raw amino-acid sequence, 291 residues long: MQDNALLKQALKHPLYEKIQKLNLKVQNSNYTIDDSFNIFCDEKLDEEIKNIALELKPWRKGPFKINKLFIDTEWQSFIKFNILKPYMQEIKGKVVADIGCNNGYYMFKMLEFNPSKLIGFDPSIKYFLQFFLLNSLAKTPIQYELLGVADVPNYGIKFDVIFCLGVIYHRSDPIAMLKQLKQSLNKDGVVFLDTMYIEDEREIALIPQKTYSKIPNIFFIPSILGLRNWCYRAGFSEFEVITTRQTDFEEQRKTQWIDSYSLDQFLDKNDSNLTCEGYEAPKRVYVKLKV.

Carboxy-S-adenosyl-L-methionine is bound by residues lysine 61, tryptophan 75, lysine 80, glycine 100, 122–124 (DPS), tyrosine 169, and arginine 284.

This sequence belongs to the class I-like SAM-binding methyltransferase superfamily. CmoB family. As to quaternary structure, homotetramer.

The catalysed reaction is carboxy-S-adenosyl-L-methionine + 5-hydroxyuridine(34) in tRNA = 5-carboxymethoxyuridine(34) in tRNA + S-adenosyl-L-homocysteine + H(+). Catalyzes carboxymethyl transfer from carboxy-S-adenosyl-L-methionine (Cx-SAM) to 5-hydroxyuridine (ho5U) to form 5-carboxymethoxyuridine (cmo5U) at position 34 in tRNAs. This is tRNA U34 carboxymethyltransferase from Campylobacter lari (strain RM2100 / D67 / ATCC BAA-1060).